The primary structure comprises 578 residues: Hyaluronan synthase 1 (578 aa).

At 1-25 (MRQQDAPKPTPAACRCSGLARRVLT) the chain is on the cytoplasmic side. The chain crosses the membrane as a helical span at residues 26–46 (IAFALLILGLMTWAYAAGVPL). The Extracellular segment spans residues 47-52 (ASDRYG). A helical membrane pass occupies residues 53–73 (LLAFGLYGAFLSAHLVAQSLF). Topologically, residues 74-399 (AYLEHRRVAA…NALWWHRHHA (326 aa)) are cytoplasmic. A helical transmembrane segment spans residues 400 to 420 (WMTYEAVVSGLFPFFVAATVL). The Extracellular segment spans residues 421 to 430 (RLFYAGRPWA). Residues 431-451 (LLWVLLCVQGVALAKAAFAAW) form a helical membrane-spanning segment. Over 452 to 457 (LRGCLR) the chain is Cytoplasmic. Residues 458–478 (MVLLSLYAPLYMCGLLPAKFL) traverse the membrane as a helical segment. Residues 479–497 (ALVTMNQSGWGTSGRRKLA) lie on the Extracellular side of the membrane. Residues 498 to 518 (ANYVPLLPLALWALLLLGGLV) form a helical membrane-spanning segment. Residues 519-540 (RSVAHEARADWSGPSRAAEAYH) lie on the Cytoplasmic side of the membrane. A helical membrane pass occupies residues 541–561 (LAAGAGAYVGYWVAMLTLYWV). Topologically, residues 562-578 (GVRRLCRRRTGGYRVQV) are extracellular.

Belongs to the NodC/HAS family. Mg(2+) serves as cofactor. Widely expressed. Highly expressed in ovary followed by spleen, thymus, prostate, testes and large intestine. Weakly expressed in small intestine.

Its subcellular location is the membrane. It catalyses the reaction [hyaluronan](n) + UDP-N-acetyl-alpha-D-glucosamine = N-acetyl-beta-D-glucosaminyl-(1-&gt;4)-[hyaluronan](n) + UDP + H(+). The catalysed reaction is N-acetyl-beta-D-glucosaminyl-(1-&gt;4)-[hyaluronan](n) + UDP-alpha-D-glucuronate = [hyaluronan](n+1) + UDP + H(+). Its pathway is glycan biosynthesis; hyaluronan biosynthesis. Catalyzes the addition of GlcNAc or GlcUA monosaccharides to the nascent hyaluronan polymer. Therefore, it is essential to hyaluronan synthesis a major component of most extracellular matrices that has a structural role in tissues architectures and regulates cell adhesion, migration and differentiation. This is one of the isozymes catalyzing that reaction. Also able to catalyze the synthesis of chito-oligosaccharide depending on the substrate. This chain is Hyaluronan synthase 1 (HAS1), found in Homo sapiens (Human).